Consider the following 315-residue polypeptide: Adenine deaminase (315 aa).

3 residues coordinate Zn(2+): His-14, His-16, and His-194. Glu-197 functions as the Proton donor in the catalytic mechanism. Asp-275 provides a ligand contact to Zn(2+). Asp-276 is a substrate binding site.

The protein belongs to the metallo-dependent hydrolases superfamily. Adenosine and AMP deaminases family. Adenine deaminase type 2 subfamily. It depends on Zn(2+) as a cofactor.

It catalyses the reaction adenine + H2O + H(+) = hypoxanthine + NH4(+). In terms of biological role, catalyzes the hydrolytic deamination of adenine to hypoxanthine. Plays an important role in the purine salvage pathway and in nitrogen catabolism. The protein is Adenine deaminase of Ectopseudomonas mendocina (strain ymp) (Pseudomonas mendocina).